The following is a 1386-amino-acid chain: MNYTTALPDFIEMQRVSFCWFIAQGLNEELNTFSRIYDFSQNTEYVLFGQEYSLVKPIYNIVRAKKYTANYSAQLVIPLEVRNKKTNIIKYHSKFPIINLPLMTSSATFVINGCERVIVSQIIRSPGVYFEKNKHQKKNKKIRKLISSEIGKLKSFTPPSEILPTESRLYFLKPTIKKKLISDKKKKIRFIKKEEYWNWKGESLNIYSFKQIKDYEIDFSTSFVEHFKVYNDLFKIRHLSTKIKRIKIFLKWLACNNKFSLPNKKHLIFLLINSFNLLSRTIVKYKILKTRNNENKNDFILNDYNQIKKVYDQVLQESETLLSLNINTQILSFILRDLEKFNQLNNFNFLKLNITPKIKVIIANDKIKSSLYFTNSFKELIKFKYNFTKKEKDKKRNQSQATIFKNKTKYLKTKSKIIQYKDDHLIRDIYKKKYEEKELYTATLIPEYGSWIRFGFQKNTKINISKYPIKNQEDEIIIQLDKVTQKPIIHLLKEMGVTDLEICQNLQNSEFFYFNKPILTNSIHQPNKLLRFNLNKNYYKNISEFSRIFDPSYYRLGKIGRSKLNNRLDINLSKRITTITYEDIFAIIDKLITLSTAKQISDDIDHLKNRRVRSVGELLQNLFRIGFQRLLRKLRSQTNKTYSSQLSSFNIVGATIKEFFGASQLSQYMDQTNPLSSLTHRRRISGLGPGGFDRDRISFAVRDIHPSHYGRICPIETPEGQNVGLIASLTTCARVNESGFLETPFWRVINGKVIKNRNPIYLTADIEDFYKIAPADISTNQENYLTKNLIPVRYKQDFLTVTPSEVDFIAVSPIQVVSVAASLIPFFEHDDANRALMGSNMQRQSVPLLLPQKPIVGTGLENQIALDSGMVINAQRAGIVESVTANKIIILEDSGRHYKYDLQKYQRSNQETCINHRPIVWEGEKVKSGQMLTDGPGIISSELSLGQNVLVAYMPWQGYNFEDAILINERLVYEDIFTSIHIERYEIEIDRTAEMSEQTTNNIPNLSISDVQNLNEDGIVTIGTFVKPGDILVGKIIPKDDSEQLPESKLLRAIFGAKAKGVRDTSFRMPEGEYGRVIETLTFNRRTKLAYKFEKIQIFIAQIRKIQVGDKIAGRHGNKGIISRILPRQDMPFLPDGTPVDIILNPLGVPSRMNVGQLYECLLGLAGHKLNRRFKILPFDEMYGPEVSRILINKKLRQASIENDEAWLFNPYSPGKMVLLDGRTGKEFDNPITVGNAYMLKLIHLVDDKMHSRATGPYSLVTQQPLGGKAQHGGQRFGEMEVWALEGFGASFTLKELLTIKSDDMQGRNETLNSIIKGQPIPTSGVPESFKVLVQELRSIGLDLSTYRIDEFSSNQSYEIELNLIEKYNPLLKTFSHTSNINNISF.

It belongs to the RNA polymerase beta chain family. As to quaternary structure, in plastids the minimal PEP RNA polymerase catalytic core is composed of four subunits: alpha, beta, beta', and beta''. When a (nuclear-encoded) sigma factor is associated with the core the holoenzyme is formed, which can initiate transcription.

Its subcellular location is the plastid. The protein localises to the chloroplast. It carries out the reaction RNA(n) + a ribonucleoside 5'-triphosphate = RNA(n+1) + diphosphate. Its function is as follows. DNA-dependent RNA polymerase catalyzes the transcription of DNA into RNA using the four ribonucleoside triphosphates as substrates. This Thalassiosira pseudonana (Marine diatom) protein is DNA-directed RNA polymerase subunit beta.